Here is a 190-residue protein sequence, read N- to C-terminus: Ribose 1,5-bisphosphate phosphokinase PhnN (190 aa).

An ATP-binding site is contributed by 11–18 (GPSGSGKD).

This sequence belongs to the ribose 1,5-bisphosphokinase family.

It carries out the reaction alpha-D-ribose 1,5-bisphosphate + ATP = 5-phospho-alpha-D-ribose 1-diphosphate + ADP. It participates in metabolic intermediate biosynthesis; 5-phospho-alpha-D-ribose 1-diphosphate biosynthesis; 5-phospho-alpha-D-ribose 1-diphosphate from D-ribose 5-phosphate (route II): step 3/3. Catalyzes the phosphorylation of ribose 1,5-bisphosphate to 5-phospho-D-ribosyl alpha-1-diphosphate (PRPP). This is Ribose 1,5-bisphosphate phosphokinase PhnN from Thiobacillus denitrificans (strain ATCC 25259 / T1).